Consider the following 465-residue polypeptide: Na(+)-translocating NADH-quinone reductase subunit A (465 aa).

Belongs to the NqrA family. Composed of six subunits; NqrA, NqrB, NqrC, NqrD, NqrE and NqrF.

It carries out the reaction a ubiquinone + n Na(+)(in) + NADH + H(+) = a ubiquinol + n Na(+)(out) + NAD(+). Its function is as follows. NQR complex catalyzes the reduction of ubiquinone-1 to ubiquinol by two successive reactions, coupled with the transport of Na(+) ions from the cytoplasm to the periplasm. NqrA to NqrE are probably involved in the second step, the conversion of ubisemiquinone to ubiquinol. The polypeptide is Na(+)-translocating NADH-quinone reductase subunit A (Chlamydia trachomatis serovar A (strain ATCC VR-571B / DSM 19440 / HAR-13)).